The chain runs to 529 residues: Methionine--tRNA ligase (529 aa).

The 'HIGH' region motif lies at 12 to 22 (YYVNALPHIGS). Residues C127, C130, C145, and H148 each coordinate Zn(2+). The short motif at 301–305 (KMGKS) is the 'KMSKS' region element. K304 contacts ATP.

Belongs to the class-I aminoacyl-tRNA synthetase family. MetG type 2A subfamily. As to quaternary structure, monomer. The cofactor is Zn(2+).

It is found in the cytoplasm. The enzyme catalyses tRNA(Met) + L-methionine + ATP = L-methionyl-tRNA(Met) + AMP + diphosphate. Functionally, is required not only for elongation of protein synthesis but also for the initiation of all mRNA translation through initiator tRNA(fMet) aminoacylation. The sequence is that of Methionine--tRNA ligase from Thermosynechococcus vestitus (strain NIES-2133 / IAM M-273 / BP-1).